A 215-amino-acid chain; its full sequence is Probable transaldolase (215 aa).

The active-site Schiff-base intermediate with substrate is Lys-83.

The protein belongs to the transaldolase family. Type 3B subfamily.

The protein resides in the cytoplasm. The enzyme catalyses D-sedoheptulose 7-phosphate + D-glyceraldehyde 3-phosphate = D-erythrose 4-phosphate + beta-D-fructose 6-phosphate. Its pathway is carbohydrate degradation; pentose phosphate pathway; D-glyceraldehyde 3-phosphate and beta-D-fructose 6-phosphate from D-ribose 5-phosphate and D-xylulose 5-phosphate (non-oxidative stage): step 2/3. In terms of biological role, transaldolase is important for the balance of metabolites in the pentose-phosphate pathway. This Clostridium perfringens (strain 13 / Type A) protein is Probable transaldolase.